The sequence spans 247 residues: Carboxy-S-adenosyl-L-methionine synthase (247 aa).

S-adenosyl-L-methionine is bound by residues Tyr-40, 65–67 (GAS), 90–91 (DN), 122–123 (DI), Asn-137, and Arg-204.

Belongs to the class I-like SAM-binding methyltransferase superfamily. Cx-SAM synthase family. In terms of assembly, homodimer.

The catalysed reaction is prephenate + S-adenosyl-L-methionine = carboxy-S-adenosyl-L-methionine + 3-phenylpyruvate + H2O. Catalyzes the conversion of S-adenosyl-L-methionine (SAM) to carboxy-S-adenosyl-L-methionine (Cx-SAM). In Pseudomonas putida (strain ATCC 47054 / DSM 6125 / CFBP 8728 / NCIMB 11950 / KT2440), this protein is Carboxy-S-adenosyl-L-methionine synthase.